Here is a 122-residue protein sequence, read N- to C-terminus: Acyl carrier protein 1, mitochondrial (122 aa).

Residues 1–34 constitute a mitochondrion transit peptide; that stretch reads MALRNAILRHLRVPVQTLGLNQSKIGFLGTIRSF. Residues 44–119 enclose the Carrier domain; sequence EAVVDRVLDV…LAIEYVYNHP (76 aa). At Ser79 the chain carries O-(pantetheine 4'-phosphoryl)serine.

The protein belongs to the acyl carrier protein (ACP) family. As to quaternary structure, complex I is composed of at least 49 different subunits. 4'-phosphopantetheine is transferred from CoA to a specific serine of the apo-ACP-like protein.

It is found in the mitochondrion. The protein operates within lipid metabolism; fatty acid biosynthesis. In terms of biological role, carrier of the growing fatty acid chain in fatty acid biosynthesis. May be involved in the synthesis of short and medium chain fatty acids. Accessory and non-catalytic subunit of the mitochondrial membrane respiratory chain NADH dehydrogenase (Complex I), which functions in the transfer of electrons from NADH to the respiratory chain. The protein is Acyl carrier protein 1, mitochondrial (MTACP1) of Arabidopsis thaliana (Mouse-ear cress).